Here is a 297-residue protein sequence, read N- to C-terminus: Large ribosomal subunit protein uL15m (297 aa).

Residues 1–22 (MAGPVRGAAGPWALDLLRALPR) constitute a mitochondrion transit peptide. Residues 27-68 (NLRPNPGSRKPERRRRGQRRGRKCGRGHKGERQRGTRPRLGF) form a disordered region. Over residues 37-53 (PERRRRGQRRGRKCGRG) the composition is skewed to basic residues.

Belongs to the universal ribosomal protein uL15 family. As to quaternary structure, component of the mitochondrial ribosome large subunit (39S) which comprises a 16S rRNA and about 50 distinct proteins.

The protein localises to the mitochondrion. In Bos taurus (Bovine), this protein is Large ribosomal subunit protein uL15m (MRPL15).